The primary structure comprises 626 residues: ATP-dependent zinc metalloprotease FtsH (626 aa).

Residues 1-7 (MNGNRPN) lie on the Cytoplasmic side of the membrane. A helical membrane pass occupies residues 8-28 (YISLIFAALVILSLFWLVRSF). Over 29–108 (YFDTSAPSKM…VTGEKGVSSS (80 aa)) the chain is Periplasmic. Residues 109–129 (FWVNVIGNVIFIGFLLFMFFF) form a helical membrane-spanning segment. Over 130 to 626 (MMRTISGRNN…RAAAGSEQDS (497 aa)) the chain is Cytoplasmic. 202–209 (GPPGTGKT) contacts ATP. Histidine 424 is a Zn(2+) binding site. Glutamate 425 is a catalytic residue. Zn(2+) contacts are provided by histidine 428 and aspartate 501.

In the central section; belongs to the AAA ATPase family. It in the C-terminal section; belongs to the peptidase M41 family. In terms of assembly, homohexamer. The cofactor is Zn(2+).

The protein resides in the cell inner membrane. In terms of biological role, acts as a processive, ATP-dependent zinc metallopeptidase for both cytoplasmic and membrane proteins. Plays a role in the quality control of integral membrane proteins. This chain is ATP-dependent zinc metalloprotease FtsH, found in Pseudothermotoga lettingae (strain ATCC BAA-301 / DSM 14385 / NBRC 107922 / TMO) (Thermotoga lettingae).